The primary structure comprises 445 residues: T-box transcription factor TBX19 (445 aa).

Positions 45–218 (LEDAPLWQRF…YNPFAKAFLD (174 aa)) form a DNA-binding region, T-box.

Its subcellular location is the nucleus. Its function is as follows. Transcriptional regulator involved in developmental processes. Can activate POMC gene expression and repress the alpha glycoprotein subunit and thyroid-stimulating hormone beta promoters. The sequence is that of T-box transcription factor TBX19 from Canis lupus familiaris (Dog).